The following is a 687-amino-acid chain: Variant-specific surface protein VSP4A1 (687 aa).

The first 14 residues, M1–A14, serve as a signal peptide directing secretion. The Extracellular portion of the chain corresponds to A15–G660. A helical membrane pass occupies residues I661 to I681. Residues C682–Q687 lie on the Cytoplasmic side of the membrane.

Belongs to the Giardia variant surface protein family. Post-translationally, O-glycosylated. The major glycan is a trisaccharide with Glc at the reducing terminus. In terms of processing, palmitoylated.

Its subcellular location is the cell membrane. The chain is Variant-specific surface protein VSP4A1 from Giardia intestinalis (Giardia lamblia).